The sequence spans 260 residues: 5'-nucleotidase SurE (260 aa).

A divalent metal cation is bound by residues D8, D9, S39, and N93.

Belongs to the SurE nucleotidase family. Requires a divalent metal cation as cofactor.

The protein localises to the cytoplasm. It catalyses the reaction a ribonucleoside 5'-phosphate + H2O = a ribonucleoside + phosphate. Nucleotidase that shows phosphatase activity on nucleoside 5'-monophosphates. This Thermofilum pendens (strain DSM 2475 / Hrk 5) protein is 5'-nucleotidase SurE.